The chain runs to 533 residues: MQATVPWLSLSILVPIVGALLVPLVPDKGEGKQVRWYALIVTLITFLITVAAYLTGYDPSLSGLQLSERVSWLPDLGLTWAVGADGLSMPLILLTSFITSLACLAAWPVSFKPRLFYFLLLAMDGGQIAVFAVQDMLLFFLAWELELIPVYLLLAIWGGKKRQYAATKFILYTAGSSLFILLAALAMGFFGGGTPSFEYTALAAKDFGTGFQLLCYAGLLIAFGVKLPIVPLHTWLPDAHGEATAPVHMLLAGILLKMGGYALLRFNCELLPAAHSQFAPLLIVLGVVNIIYAALTSFAQRNLKRKIAYSSISHMGFVLIGVGSFSALGTSGAMLQMISHGLIGASLFFLVGATYDRTHTLQLDEMGGIGQKMRIMFALWTVCALASLALPGMSGFVSELMVFAGFATDEAYTLPFRVVICGLAAVGVILTPIYLLSMLREIFFGKEKEELVSHTNLVDAEPREVYIIGCLLVPIIGIGLYPKLMTDSYRSSIEALVSRNLGAMEQVISPTAPLIRGQAPVPAIIQAPAVGAS.

15 helical membrane-spanning segments follow: residues 5 to 25, 36 to 56, 70 to 90, 91 to 111, 115 to 135, 137 to 157, 169 to 189, 210 to 230, 244 to 264, 278 to 298, 315 to 335, 336 to 356, 377 to 397, 418 to 438, and 465 to 485; these read VPWL…VPLV, WYAL…YLTG, VSWL…LSMP, LILL…PVSF, LFYF…AVQD, LLFF…LAIW, FILY…AMGF, GFQL…LPIV, TAPV…YALL, FAPL…LTSF, MGFV…GAML, QMIS…ATYD, FALW…SGFV, VVIC…LLSM, and VYII…PKLM.

It belongs to the complex I subunit 4 family.

Its subcellular location is the cellular thylakoid membrane. It carries out the reaction a plastoquinone + NADH + (n+1) H(+)(in) = a plastoquinol + NAD(+) + n H(+)(out). The enzyme catalyses a plastoquinone + NADPH + (n+1) H(+)(in) = a plastoquinol + NADP(+) + n H(+)(out). In terms of biological role, NDH-1 shuttles electrons from NAD(P)H, via FMN and iron-sulfur (Fe-S) centers, to quinones in the respiratory chain. The immediate electron acceptor for the enzyme in this species is believed to be plastoquinone. Couples the redox reaction to proton translocation (for every two electrons transferred, four hydrogen ions are translocated across the cytoplasmic membrane), and thus conserves the redox energy in a proton gradient. The chain is NAD(P)H-quinone oxidoreductase chain 4 from Synechococcus sp. (strain CC9605).